The primary structure comprises 401 residues: Argininosuccinate synthase (401 aa).

ATP is bound by residues 7 to 15 (AYSGGLDTS) and Ala-34. Positions 85 and 90 each coordinate L-citrulline. Gly-115 is an ATP binding site. Residues Thr-117, Asn-121, and Asp-122 each contribute to the L-aspartate site. Asn-121 is an L-citrulline binding site. Residues Arg-125, Ser-174, Ser-183, Glu-259, and Tyr-271 each contribute to the L-citrulline site.

The protein belongs to the argininosuccinate synthase family. Type 1 subfamily. Homotetramer.

Its subcellular location is the cytoplasm. The catalysed reaction is L-citrulline + L-aspartate + ATP = 2-(N(omega)-L-arginino)succinate + AMP + diphosphate + H(+). The protein operates within amino-acid biosynthesis; L-arginine biosynthesis; L-arginine from L-ornithine and carbamoyl phosphate: step 2/3. The polypeptide is Argininosuccinate synthase (Pelotomaculum thermopropionicum (strain DSM 13744 / JCM 10971 / SI)).